The following is a 59-amino-acid chain: Large ribosomal subunit protein uL30 (59 aa).

The protein belongs to the universal ribosomal protein uL30 family. As to quaternary structure, part of the 50S ribosomal subunit.

The protein is Large ribosomal subunit protein uL30 of Hydrogenobaculum sp. (strain Y04AAS1).